The sequence spans 313 residues: Glutaminase (313 aa).

Substrate contacts are provided by serine 64, asparagine 116, glutamate 163, asparagine 170, tyrosine 194, tyrosine 246, and valine 264.

It belongs to the glutaminase family. As to quaternary structure, homotetramer.

The catalysed reaction is L-glutamine + H2O = L-glutamate + NH4(+). The protein is Glutaminase of Exiguobacterium sp. (strain ATCC BAA-1283 / AT1b).